The following is a 199-amino-acid chain: Glycerol-3-phosphate acyltransferase (199 aa).

Helical transmembrane passes span Phe-4 to Ile-24, Leu-56 to Leu-76, Gln-80 to Phe-100, Ile-115 to Leu-135, and Tyr-154 to Arg-176.

This sequence belongs to the PlsY family. In terms of assembly, probably interacts with PlsX.

Its subcellular location is the cell inner membrane. The catalysed reaction is an acyl phosphate + sn-glycerol 3-phosphate = a 1-acyl-sn-glycero-3-phosphate + phosphate. Its pathway is lipid metabolism; phospholipid metabolism. Functionally, catalyzes the transfer of an acyl group from acyl-phosphate (acyl-PO(4)) to glycerol-3-phosphate (G3P) to form lysophosphatidic acid (LPA). This enzyme utilizes acyl-phosphate as fatty acyl donor, but not acyl-CoA or acyl-ACP. In Haemophilus influenzae (strain PittEE), this protein is Glycerol-3-phosphate acyltransferase.